The sequence spans 279 residues: Pantothenate synthetase (279 aa).

26–33 (MGALHSGH) contacts ATP. Histidine 33 serves as the catalytic Proton donor. A (R)-pantoate-binding site is contributed by glutamine 57. Glutamine 57 serves as a coordination point for beta-alanine. ATP is bound at residue 147 to 150 (GQKD). Glutamine 153 serves as a coordination point for (R)-pantoate. ATP-binding positions include isoleucine 176 and 184–187 (ESSR).

The protein belongs to the pantothenate synthetase family. In terms of assembly, homodimer.

The protein resides in the cytoplasm. The catalysed reaction is (R)-pantoate + beta-alanine + ATP = (R)-pantothenate + AMP + diphosphate + H(+). The protein operates within cofactor biosynthesis; (R)-pantothenate biosynthesis; (R)-pantothenate from (R)-pantoate and beta-alanine: step 1/1. In terms of biological role, catalyzes the condensation of pantoate with beta-alanine in an ATP-dependent reaction via a pantoyl-adenylate intermediate. The protein is Pantothenate synthetase of Corynebacterium glutamicum (strain R).